Consider the following 212-residue polypeptide: Orotate phosphoribosyltransferase (212 aa).

5-phospho-alpha-D-ribose 1-diphosphate-binding positions include Arg-97, Lys-101, His-103, and Asp-123–Ser-131. Ser-127 serves as a coordination point for orotate.

It belongs to the purine/pyrimidine phosphoribosyltransferase family. PyrE subfamily. As to quaternary structure, homodimer. The cofactor is Mg(2+).

The catalysed reaction is orotidine 5'-phosphate + diphosphate = orotate + 5-phospho-alpha-D-ribose 1-diphosphate. Its pathway is pyrimidine metabolism; UMP biosynthesis via de novo pathway; UMP from orotate: step 1/2. Its function is as follows. Catalyzes the transfer of a ribosyl phosphate group from 5-phosphoribose 1-diphosphate to orotate, leading to the formation of orotidine monophosphate (OMP). In Lactiplantibacillus plantarum (strain ATCC BAA-793 / NCIMB 8826 / WCFS1) (Lactobacillus plantarum), this protein is Orotate phosphoribosyltransferase.